Here is a 911-residue protein sequence, read N- to C-terminus: Beta-galactosidase 12 (911 aa).

The first 25 residues, 1-25 (MAARVAAAVAAALLAAALLLPGAAA), serve as a signal peptide directing secretion. Residue glutamate 192 is the Proton donor of the active site. The Nucleophile role is filled by glutamate 262. N-linked (GlcNAc...) asparagine glycans are attached at residues asparagine 263, asparagine 389, asparagine 473, and asparagine 777. Residues 744–831 (EDTSTRGTLN…ATLAVQLLLA (88 aa)) form the SUEL-type lectin domain.

The protein belongs to the glycosyl hydrolase 35 family.

The protein resides in the secreted. Its subcellular location is the extracellular space. The protein localises to the apoplast. The catalysed reaction is Hydrolysis of terminal non-reducing beta-D-galactose residues in beta-D-galactosides.. The protein is Beta-galactosidase 12 of Oryza sativa subsp. japonica (Rice).